We begin with the raw amino-acid sequence, 348 residues long: Protein RecA (348 aa).

An ATP-binding site is contributed by 64 to 71; that stretch reads GPESSGKT. The segment covering 325–335 has biased composition (basic and acidic residues); sequence YEIDGSNKEPL. The segment at 325–348 is disordered; it reads YEIDGSNKEPLDEGEETLSLLDDE. Positions 336 to 348 are enriched in acidic residues; sequence DEGEETLSLLDDE.

The protein belongs to the RecA family.

It localises to the cytoplasm. Functionally, can catalyze the hydrolysis of ATP in the presence of single-stranded DNA, the ATP-dependent uptake of single-stranded DNA by duplex DNA, and the ATP-dependent hybridization of homologous single-stranded DNAs. It interacts with LexA causing its activation and leading to its autocatalytic cleavage. In Listeria monocytogenes serotype 4b (strain CLIP80459), this protein is Protein RecA.